We begin with the raw amino-acid sequence, 265 residues long: MIKWPWKVQESAHQTALPWQEALSIPLLTCLTEQEQSKLVTLAERFLQQKRLVPLQGFELDSLRSCRIALLFCLPVLELGLEWLDGFHEVLIYPAPFVVDDEWEDDIGLVHNQRIVQSGQSWQQGPIVLNWLDIQDSFDASGFNLIIHEVAHKLDTRNGDRASGVPFIPLREVAGWEHDLHAAMNNIQEEIELVGENAASIDAYAASDPAECFAVLSEYFFSAPELFAPGFPSLWQRFCQFYQQDPLQRLHRTNDTDSFSATNVH.

His111, His148, His152, and Glu211 together coordinate Zn(2+).

This sequence belongs to the MtfA family. Interacts with Mlc. Zn(2+) serves as cofactor.

The protein localises to the cytoplasm. Functionally, involved in the modulation of the activity of the glucose-phosphotransferase system (glucose-PTS). Interacts with the transcriptional repressor Mlc, preventing its interaction with DNA and leading to the modulation of expression of genes regulated by Mlc, including ptsG, which encodes the PTS system glucose-specific EIICB component. In terms of biological role, shows zinc-dependent metallopeptidase activity. This Escherichia coli O139:H28 (strain E24377A / ETEC) protein is Mlc titration factor A.